Consider the following 181-residue polypeptide: Ribulose bisphosphate carboxylase small subunit, chloroplastic 1 (181 aa).

The transit peptide at 1-54 directs the protein to the chloroplast; it reads MASSMLSSAAVVTSPAQATMVAPFTGLKSSSAFPVTRKANNDITSIVSNGGRVS.

The protein belongs to the RuBisCO small chain family. In terms of assembly, heterohexadecamer of 8 large and 8 small subunits.

It is found in the plastid. It localises to the chloroplast. Its function is as follows. RuBisCO catalyzes two reactions: the carboxylation of D-ribulose 1,5-bisphosphate, the primary event in carbon dioxide fixation, as well as the oxidative fragmentation of the pentose substrate. Both reactions occur simultaneously and in competition at the same active site. Although the small subunit is not catalytic it is essential for maximal activity. The polypeptide is Ribulose bisphosphate carboxylase small subunit, chloroplastic 1 (Brassica napus (Rape)).